A 123-amino-acid polypeptide reads, in one-letter code: uncharacterized protein (123 aa).

Residues Met1–Asp12 show a composition bias toward polar residues. Disordered stretches follow at residues Met1–Asp25 and Pro53–Pro91. Residues Val61–Gly82 show a composition bias toward basic and acidic residues.

This is an uncharacterized protein from Homo sapiens (Human).